Here is a 602-residue protein sequence, read N- to C-terminus: DEAD-box ATP-dependent RNA helicase 53 (602 aa).

The segment covering 33-43 has biased composition (low complexity); sequence ASPLDPCRGPA. The interval 33–76 is disordered; it reads ASPLDPCRGPAAPEPPRRRAFHGSPSPLGFRSTPASWSSPEAGA. The short motif at 84 to 112 is the Q motif element; that stretch reads LEVARLGISPWIVERLAARGITRLFPIQR. The 174-residue stretch at 115-288 folds into the Helicase ATP-binding domain; the sequence is LDPAMQGKDM…SKYLKDPIII (174 aa). 128-135 serves as a coordination point for ATP; sequence ARTGTGKT. The DEAD box motif lies at 236–239; sequence DEAD. In terms of domain architecture, Helicase C-terminal spans 317–462; sequence ILGPLIKEHA…LPKIEVADEA (146 aa). Residues 503–602 form a disordered region; it reads FGDFDGFGSS…GRSGGFDDSN (100 aa).

It belongs to the DEAD box helicase family. DDX21/DDX50 subfamily.

The enzyme catalyses ATP + H2O = ADP + phosphate + H(+). This chain is DEAD-box ATP-dependent RNA helicase 53, found in Oryza sativa subsp. japonica (Rice).